Reading from the N-terminus, the 245-residue chain is Carbohydrate deacetylase (245 aa).

Mg(2+) is bound by residues His59 and His125.

This sequence belongs to the YdjC deacetylase family. As to quaternary structure, homodimer. It depends on Mg(2+) as a cofactor.

In terms of biological role, probably catalyzes the deacetylation of acetylated carbohydrates an important step in the degradation of oligosaccharides. This chain is Carbohydrate deacetylase, found in Listeria monocytogenes serotype 4a (strain HCC23).